We begin with the raw amino-acid sequence, 42 residues long: Packaging protein P20 (42 aa).

Residues 11-31 (INWLIVILMLTIAGMAATLVC) traverse the membrane as a helical segment.

In terms of assembly, heterodimer of P20 and P22; further multimerizes as hexamers of heterodimers. Part of the dodecameric portal complex that is composed of the packaging efficiency factor P6, the DNA packaging ATPase P9, and the internal heterododecamer P20/P22 which spans the virion inner membrane.

The protein localises to the virion membrane. Together with P22, forms the internal part of the portal complex embeded in the virion internal membrane and which plays critical roles in genome packaging and genome ejection. Both proteins multimerize as a single ring-shaped heterdodecamer arranged around a central channel and interact with the P6/P9 external part of the portal. The polypeptide is Packaging protein P20 (XX) (Acinetobacter calcoaceticus (Arthrobacter siderocapsulatus)).